Reading from the N-terminus, the 418-residue chain is uncharacterized protein (418 aa).

Positions 7-158 (IDVRPIAEAE…TGLDPRWSGP (152 aa)) constitute an N-acetyltransferase domain. Residues 87 to 89 (VTV) and 95 to 100 (RRGLLT) each bind acetyl-CoA. Catalysis depends on Y128, which acts as the Proton donor. The Proton acceptor; via carboxylate role is filled by F418.

This sequence belongs to the acetyltransferase Eis family. In terms of assembly, homohexamer; trimer of dimers.

This is an uncharacterized protein from Streptomyces avermitilis (strain ATCC 31267 / DSM 46492 / JCM 5070 / NBRC 14893 / NCIMB 12804 / NRRL 8165 / MA-4680).